Consider the following 180-residue polypeptide: MVSSMMVSSAATFTRASPAQSSMVAPFTGLKSASAFPVTRKPNADLSHLPSNGGRVQCMKVWPIEGVKKFETLSYLPTMKDEALVKQIEYLLRSKWIPCLEFCPKGFVWRENHRSPGYYDGRYWTMWKLPMFGCTDAVQVAKEVEECKKEYPHAFIRIIGFDNNRQVQCISFIAYKPTGY.

A chloroplast-targeting transit peptide spans 1–57 (MVSSMMVSSAATFTRASPAQSSMVAPFTGLKSASAFPVTRKPNADLSHLPSNGGRVQ).

It belongs to the RuBisCO small chain family. Heterohexadecamer of 8 large and 8 small subunits.

It is found in the plastid. Its subcellular location is the chloroplast. RuBisCO catalyzes two reactions: the carboxylation of D-ribulose 1,5-bisphosphate, the primary event in carbon dioxide fixation, as well as the oxidative fragmentation of the pentose substrate. Both reactions occur simultaneously and in competition at the same active site. Although the small subunit is not catalytic it is essential for maximal activity. The polypeptide is Ribulose bisphosphate carboxylase small subunit, chloroplastic (Musa acuminata (Banana)).